Reading from the N-terminus, the 59-residue chain is UPF0434 protein VS_2060 (59 aa).

It belongs to the UPF0434 family.

In Vibrio atlanticus (strain LGP32) (Vibrio splendidus (strain Mel32)), this protein is UPF0434 protein VS_2060.